The chain runs to 207 residues: Large ribosomal subunit protein uL4 (207 aa).

The tract at residues 47–78 is disordered; sequence GTHKVKNRSEVRGGGRKPWRQKGTGRARQGSI. A compositionally biased stretch (basic residues) spans 60 to 71; it reads GGRKPWRQKGTG.

It belongs to the universal ribosomal protein uL4 family. As to quaternary structure, part of the 50S ribosomal subunit.

In terms of biological role, one of the primary rRNA binding proteins, this protein initially binds near the 5'-end of the 23S rRNA. It is important during the early stages of 50S assembly. It makes multiple contacts with different domains of the 23S rRNA in the assembled 50S subunit and ribosome. Forms part of the polypeptide exit tunnel. In Listeria innocua serovar 6a (strain ATCC BAA-680 / CLIP 11262), this protein is Large ribosomal subunit protein uL4.